The primary structure comprises 386 residues: ADP,ATP carrier protein, mitochondrial (386 aa).

The transit peptide at 1–76 (ADNQHPTVYQ…ANASPVFVQA (76 aa)) directs the protein to the mitochondrion. Solcar repeat units lie at residues 83 to 176 (AAFA…FKRL), 188 to 281 (KWFA…LKPV), and 289 to 375 (DSFF…LQVI). Helical transmembrane passes span 85-112 (FATD…VKLL), 153-177 (TANV…KRLF), 186-206 (YWKW…SSLL), 257-278 (FNIS…YDSL), and 292-312 (FASF…SYPI). ADP contacts are provided by Arg158 and Lys170. Arg316 is a binding site for ADP. The segment at 316-321 (RRRMMM) is important for transport activity. Positions 316–321 (RRRMMM) match the Nucleotide carrier signature motif motif. Residues 352 to 372 (AGANVLRAVAGAGVLAGYDKL) traverse the membrane as a helical segment.

It belongs to the mitochondrial carrier (TC 2.A.29) family. As to quaternary structure, monomer.

The protein localises to the mitochondrion inner membrane. It catalyses the reaction ADP(in) + ATP(out) = ADP(out) + ATP(in). Its activity is regulated as follows. The matrix-open state (m-state) is inhibited by the membrane-permeable bongkrekic acid (BKA). The cytoplasmic-open state (c-state) is inhibited by the membrane-impermeable toxic inhibitor carboxyatractyloside (CATR). In terms of biological role, ADP:ATP antiporter that mediates import of ADP into the mitochondrial matrix for ATP synthesis, and export of ATP out to fuel the cell. Cycles between the cytoplasmic-open state (c-state) and the matrix-open state (m-state): operates by the alternating access mechanism with a single substrate-binding site intermittently exposed to either the cytosolic (c-state) or matrix (m-state) side of the inner mitochondrial membrane. The polypeptide is ADP,ATP carrier protein, mitochondrial (ANT1) (Solanum tuberosum (Potato)).